We begin with the raw amino-acid sequence, 472 residues long: Serralysin A (472 aa).

A propeptide spanning residues 1–17 (MEKNLSSRDDDALHSLS) is cleaved from the precursor. His-186 provides a ligand contact to Zn(2+). Glu-187 is a catalytic residue. Zn(2+) is bound by residues His-190 and Tyr-221. 31 residues coordinate Ca(2+): Arg-258, Gly-260, Thr-262, Asp-290, Gly-292, Gly-293, Thr-332, Glu-334, Gly-339, Gly-341, Asp-343, Asn-348, Ala-350, Asn-352, Gly-356, Gly-357, Ala-358, Gly-359, Asp-361, Gly-365, Gly-366, Gly-367, Gly-368, Asp-370, Gly-374, Gly-375, Gly-377, Asp-379, Asp-388, Asp-395, and Asp-405. Hemolysin-type calcium-binding repeat units lie at residues 337–354 (IGGS…DNIL) and 355–372 (RGGA…ADRL).

It belongs to the peptidase M10B family. Ca(2+) serves as cofactor. Zn(2+) is required as a cofactor.

The protein localises to the secreted. The catalysed reaction is Preferential cleavage of bonds with hydrophobic residues in P1'.. The sequence is that of Serralysin A (prtA) from Dickeya chrysanthemi (Pectobacterium chrysanthemi).